Here is a 308-residue protein sequence, read N- to C-terminus: Ornithine carbamoyltransferase (308 aa).

Residues 56–59 (STRT), glutamine 83, arginine 107, and 134–137 (HPCQ) each bind carbamoyl phosphate. Residues asparagine 165, aspartate 225, and 229 to 230 (SM) each bind L-ornithine. Carbamoyl phosphate-binding positions include 264-265 (CL) and arginine 292.

Belongs to the aspartate/ornithine carbamoyltransferase superfamily. OTCase family.

It is found in the cytoplasm. The enzyme catalyses carbamoyl phosphate + L-ornithine = L-citrulline + phosphate + H(+). Its pathway is amino-acid biosynthesis; L-arginine biosynthesis; L-arginine from L-ornithine and carbamoyl phosphate: step 1/3. In terms of biological role, reversibly catalyzes the transfer of the carbamoyl group from carbamoyl phosphate (CP) to the N(epsilon) atom of ornithine (ORN) to produce L-citrulline. In Nitrobacter winogradskyi (strain ATCC 25391 / DSM 10237 / CIP 104748 / NCIMB 11846 / Nb-255), this protein is Ornithine carbamoyltransferase.